The following is a 352-amino-acid chain: Protein O-mannose kinase (352 aa).

Residues 1-16 (MERKPSVCRKSGSWNC) lie on the Cytoplasmic side of the membrane. A helical; Signal-anchor for type II membrane protein membrane pass occupies residues 17-37 (LLVLFLLLLFTVVSVNFLLYM). The Lumenal segment spans residues 38-352 (YIDQMYAPSR…MAVAETREML (315 aa)). The 271-residue stretch at 82 to 352 (VRKLKLVGEG…MAVAETREML (271 aa)) folds into the Protein kinase domain.

It belongs to the protein kinase superfamily. Ser/Thr protein kinase family. STKL subfamily.

The protein localises to the endoplasmic reticulum membrane. It catalyses the reaction 3-O-[beta-D-GalNAc-(1-&gt;3)-beta-D-GlcNAc-(1-&gt;4)-alpha-D-Man]-L-Thr-[protein] + ATP = 3-O-[beta-D-GalNAc-(1-&gt;3)-beta-D-GlcNAc-(1-&gt;4)-(O-6-P-alpha-D-Man)]-Thr-[protein] + ADP + H(+). Its function is as follows. Protein O-mannose kinase that specifically mediates phosphorylation at the 6-position of an O-mannose of the trisaccharide (N-acetylgalactosamine (GalNAc)-beta-1,3-N-acetylglucosamine (GlcNAc)-beta-1,4-mannose) to generate phosphorylated O-mannosyl trisaccharide (N-acetylgalactosamine-beta-1,3-N-acetylglucosamine-beta-1,4-(phosphate-6-)mannose). Phosphorylated O-mannosyl trisaccharide is a carbohydrate structure present in alpha-dystroglycan (dag1), which is required for binding laminin G-like domain-containing extracellular proteins with high affinity. Only shows kinase activity when the GalNAc-beta-3-GlcNAc-beta-terminus is linked to the 4-position of O-mannose, suggesting that this disaccharide serves as the substrate recognition motif. The protein is Protein O-mannose kinase (pomk) of Xenopus laevis (African clawed frog).